Reading from the N-terminus, the 196-residue chain is Peptide methionine sulfoxide reductase MsrA 2 (196 aa).

C36 is a catalytic residue.

Belongs to the MsrA Met sulfoxide reductase family.

The enzyme catalyses L-methionyl-[protein] + [thioredoxin]-disulfide + H2O = L-methionyl-(S)-S-oxide-[protein] + [thioredoxin]-dithiol. It carries out the reaction [thioredoxin]-disulfide + L-methionine + H2O = L-methionine (S)-S-oxide + [thioredoxin]-dithiol. In terms of biological role, has an important function as a repair enzyme for proteins that have been inactivated by oxidation. Catalyzes the reversible oxidation-reduction of methionine sulfoxide in proteins to methionine. This Caulobacter vibrioides (strain ATCC 19089 / CIP 103742 / CB 15) (Caulobacter crescentus) protein is Peptide methionine sulfoxide reductase MsrA 2 (msrA2).